The primary structure comprises 232 residues: Pyridoxal 5'-phosphate synthase subunit PdxS (232 aa).

Catalysis depends on Lys-23, which acts as the Schiff-base intermediate with D-ribose 5-phosphate. Position 95 (Gly-95) interacts with D-ribose 5-phosphate. Arg-107 provides a ligand contact to D-glyceraldehyde 3-phosphate. Residues Gly-156 and 177-178 (GS) contribute to the D-ribose 5-phosphate site.

It belongs to the PdxS/SNZ family. In terms of assembly, in the presence of PdxT, forms a dodecamer of heterodimers.

The catalysed reaction is aldehydo-D-ribose 5-phosphate + D-glyceraldehyde 3-phosphate + L-glutamine = pyridoxal 5'-phosphate + L-glutamate + phosphate + 3 H2O + H(+). It participates in cofactor biosynthesis; pyridoxal 5'-phosphate biosynthesis. Catalyzes the formation of pyridoxal 5'-phosphate from ribose 5-phosphate (RBP), glyceraldehyde 3-phosphate (G3P) and ammonia. The ammonia is provided by the PdxT subunit. Can also use ribulose 5-phosphate and dihydroxyacetone phosphate as substrates, resulting from enzyme-catalyzed isomerization of RBP and G3P, respectively. This Clostridium novyi protein is Pyridoxal 5'-phosphate synthase subunit PdxS.